A 369-amino-acid polypeptide reads, in one-letter code: Aspartate beta-hydroxylase domain-containing protein 2 (369 aa).

The Cytoplasmic portion of the chain corresponds to 1–58; that stretch reads MVWAPLGPPRTDCLTLLHTPSKDSPKMSLEWLVAWSWSLDGLRDCIATGIQSVRDCDT. Residues 59-79 traverse the membrane as a helical segment; that stretch reads TAVITVACLLVLFVWYCYHVG. The Lumenal portion of the chain corresponds to 80–369; it reads REQPRPYVSV…ALDFIFAPGR (290 aa). N-linked (GlcNAc...) asparagine glycosylation is present at Asn211. Residues Trp228 and Ser272 each contribute to the 2-oxoglutarate site. His283 serves as a coordination point for Fe cation. Residue 292–294 participates in 2-oxoglutarate binding; that stretch reads RCH. Residue His328 participates in Fe cation binding. Arg341 lines the 2-oxoglutarate pocket.

This sequence belongs to the aspartyl/asparaginyl beta-hydroxylase family. The cofactor is Fe cation.

The protein resides in the membrane. Its function is as follows. May function as 2-oxoglutarate-dependent dioxygenase. The chain is Aspartate beta-hydroxylase domain-containing protein 2 (ASPHD2) from Homo sapiens (Human).